The chain runs to 273 residues: tRNA pseudouridine synthase B (273 aa).

Asp-38 acts as the Nucleophile in catalysis.

The protein belongs to the pseudouridine synthase TruB family. Type 1 subfamily.

The catalysed reaction is uridine(55) in tRNA = pseudouridine(55) in tRNA. Functionally, responsible for synthesis of pseudouridine from uracil-55 in the psi GC loop of transfer RNAs. The sequence is that of tRNA pseudouridine synthase B from Campylobacter curvus (strain 525.92).